Consider the following 113-residue polypeptide: Photosystem II reaction center Psb28 protein (113 aa).

It belongs to the Psb28 family. Part of the photosystem II complex.

The protein localises to the cellular thylakoid membrane. This chain is Photosystem II reaction center Psb28 protein, found in Prochlorococcus marinus (strain NATL2A).